A 140-amino-acid chain; its full sequence is Small ribosomal subunit protein uS19 (140 aa).

The disordered stretch occupies residues 120–140 (RPKHSAPGIGATRSSAHVSKK). Positions 131–140 (TRSSAHVSKK) are enriched in polar residues.

The protein belongs to the universal ribosomal protein uS19 family.

Protein S19 forms a complex with S13 that binds strongly to the 16S ribosomal RNA. The protein is Small ribosomal subunit protein uS19 of Nanoarchaeum equitans (strain Kin4-M).